The following is an 80-amino-acid chain: MNSLNINLLYIAATIMMGLAAIGAAIGIGILGGKFLEGAARQPDLIPLLRSQFFIVMGLVDAIPMITVGLGLYILFAVAS.

Transmembrane regions (helical) follow at residues isoleucine 11–leucine 31 and phenylalanine 54–isoleucine 74.

It belongs to the ATPase C chain family. As to quaternary structure, F-type ATPases have 2 components, F(1) - the catalytic core - and F(0) - the membrane proton channel. F(1) has five subunits: alpha(3), beta(3), gamma(1), delta(1), epsilon(1). F(0) has three main subunits: a(1), b(2) and c(10-14). The alpha and beta chains form an alternating ring which encloses part of the gamma chain. F(1) is attached to F(0) by a central stalk formed by the gamma and epsilon chains, while a peripheral stalk is formed by the delta and b chains.

It localises to the cell membrane. In terms of biological role, f(1)F(0) ATP synthase produces ATP from ADP in the presence of a proton or sodium gradient. F-type ATPases consist of two structural domains, F(1) containing the extramembraneous catalytic core and F(0) containing the membrane proton channel, linked together by a central stalk and a peripheral stalk. During catalysis, ATP synthesis in the catalytic domain of F(1) is coupled via a rotary mechanism of the central stalk subunits to proton translocation. Key component of the F(0) channel; it plays a direct role in translocation across the membrane. A homomeric c-ring of between 10-14 subunits forms the central stalk rotor element with the F(1) delta and epsilon subunits. The protein is ATP synthase subunit c of Baumannia cicadellinicola subsp. Homalodisca coagulata.